The primary structure comprises 97 residues: Small ribosomal subunit protein bS20 (97 aa).

The protein belongs to the bacterial ribosomal protein bS20 family.

In terms of biological role, binds directly to 16S ribosomal RNA. The chain is Small ribosomal subunit protein bS20 from Synechocystis sp. (strain ATCC 27184 / PCC 6803 / Kazusa).